Reading from the N-terminus, the 221-residue chain is Chalcone--flavanone isomerase (221 aa).

Threonine 47, asparagine 112, and serine 189 together coordinate substrate.

The protein belongs to the chalcone isomerase family.

The catalysed reaction is a chalcone = a flavanone.. The protein operates within secondary metabolite biosynthesis; flavonoid biosynthesis. Functionally, catalyzes the intramolecular cyclization of bicyclic chalcones into tricyclic (S)-flavanones. Responsible for the isomerization of 4,2',4',6'-tetrahydroxychalcone (also termed chalcone) into naringenin. In Dianthus caryophyllus (Carnation), this protein is Chalcone--flavanone isomerase (CHI).